The sequence spans 484 residues: Ectonucleoside triphosphate diphosphohydrolase 6 (484 aa).

At 1-39 the chain is on the cytoplasmic side; the sequence is MKKGIRYETSRKTSYIFQQPQHGPWQTRMRKISNHGSLR. The chain crosses the membrane as a helical; Signal-anchor for type II membrane protein span at residues 40 to 60; it reads VAKVAYPLGLCVGVFIYVAYI. Residues 61–484 lie on the Lumenal side of the membrane; that stretch reads KWHRATATQA…SLNRQKSPAS (424 aa). Asn-220 carries N-linked (GlcNAc...) asparagine glycosylation. The active-site Proton acceptor is the Glu-224. Asn-284 is a glycosylation site (N-linked (GlcNAc...) asparagine). 2 disulfides stabilise this stretch: Cys-325-Cys-356 and Cys-416-Cys-430.

This sequence belongs to the GDA1/CD39 NTPase family. Monomer. It depends on Ca(2+) as a cofactor. Mg(2+) serves as cofactor. Post-translationally, the secreted form may be produced by intracellular processing. N-glycosylated. Expressed in most tissues, but predominantly in heart.

The protein resides in the golgi apparatus membrane. It is found in the secreted. The protein localises to the cell membrane. The catalysed reaction is a ribonucleoside 5'-diphosphate + H2O = a ribonucleoside 5'-phosphate + phosphate + H(+). It catalyses the reaction IDP + H2O = IMP + phosphate + H(+). The enzyme catalyses GDP + H2O = GMP + phosphate + H(+). It carries out the reaction UDP + H2O = UMP + phosphate + H(+). With respect to regulation, glycosylation does not appear to be required for enzymatic activity. Catalyzes the hydrolysis of nucleoside triphosphates and diphosphates in a calcium- or magnesium-dependent manner. Has a strong preference for nucleoside diphosphates, preferentially hydrolyzes GDP, IDP, and UDP, with slower hydrolysis of CDP, ITP, GTP, CTP, ADP, and UTP and virtually no hydrolysis of ATP. The membrane bound form might support glycosylation reactions in the Golgi apparatus and, when released from cells, might catalyze the hydrolysis of extracellular nucleotides. The sequence is that of Ectonucleoside triphosphate diphosphohydrolase 6 (ENTPD6) from Homo sapiens (Human).